A 339-amino-acid polypeptide reads, in one-letter code: Fructose-1,6-bisphosphatase isozyme 2 (339 aa).

Residues 3-10 (DRSPFETD) form an important for interaction with ALDOA region. AMP is bound by residues valine 18 and 28-32 (TGELT). Mg(2+)-binding residues include aspartate 69 and glutamate 98. 113 to 114 (KY) is an AMP binding site. Residues aspartate 119, leucine 121, and aspartate 122 each contribute to the Mg(2+) site. Aspartate 122 is a substrate binding site. Residue arginine 141 participates in AMP binding. Residues 204–208 (KKKGK) carry the Nuclear localization signal motif. Position 213-216 (213-216 (NEGY)) interacts with substrate. Phosphotyrosine is present on residues tyrosine 216 and tyrosine 219. Residues 245–249 (YVGSM), tyrosine 265, and lysine 275 contribute to the substrate site. Glutamate 281 is a binding site for Mg(2+).

The protein belongs to the FBPase class 1 family. Homotetramer. Interacts with ALDOA; the interaction blocks inhibition by physiological concentrations of AMP and reduces inhibition by Ca(2+). Interacts with alpha-actinin and F-actin. The cofactor is Mg(2+).

It localises to the cell junction. It is found in the cytoplasm. The protein resides in the nucleus. The protein localises to the myofibril. Its subcellular location is the sarcomere. It localises to the z line. The catalysed reaction is beta-D-fructose 1,6-bisphosphate + H2O = beta-D-fructose 6-phosphate + phosphate. It participates in carbohydrate biosynthesis; gluconeogenesis. With respect to regulation, subject to complex allosteric regulation. The enzyme can assume an active R-state, or an inactive T-state. Intermediate conformations may exist. AMP acts as an allosteric inhibitor. Fructose 2,6-bisphosphate acts as a competitive inhibitor. Strongly inhibited by Ca(2+). Catalyzes the hydrolysis of fructose 1,6-bisphosphate to fructose 6-phosphate in the presence of divalent cations and probably participates in glycogen synthesis from carbohydrate precursors, such as lactate. In Oryctolagus cuniculus (Rabbit), this protein is Fructose-1,6-bisphosphatase isozyme 2 (FBP2).